Reading from the N-terminus, the 261-residue chain is Undecaprenyl-diphosphatase 2 (261 aa).

Transmembrane regions (helical) follow at residues 1 to 21 (MLEA…PISS), 38 to 58 (PGKT…CVVF), 75 to 95 (FAFA…GATL), 103 to 123 (LESP…ILVI), 138 to 158 (MSPA…VPGV), 178 to 198 (AAEF…AYSL), 212 to 232 (LIAL…KGFI), and 240 to 260 (FAPF…LILM).

It belongs to the UppP family.

The protein resides in the cell inner membrane. It catalyses the reaction di-trans,octa-cis-undecaprenyl diphosphate + H2O = di-trans,octa-cis-undecaprenyl phosphate + phosphate + H(+). Its function is as follows. Catalyzes the dephosphorylation of undecaprenyl diphosphate (UPP). Confers resistance to bacitracin. In Paramagnetospirillum magneticum (strain ATCC 700264 / AMB-1) (Magnetospirillum magneticum), this protein is Undecaprenyl-diphosphatase 2.